The primary structure comprises 377 residues: Flagellin C (377 aa).

Coiled-coil stretches lie at residues 103-129 and 301-340; these read SNSKADRVAIQEEITALNDELNRVAET and VDSHRAELGAFQNRFNHAINNLDNINENVNASKSRIKDTD.

Belongs to the bacterial flagellin family. Heteromer of multiple flagellin subunits including FlaA, FlaB, FlaC, FlaD and FlaE.

It is found in the secreted. The protein localises to the bacterial flagellum. Functionally, flagellin is the subunit protein which polymerizes to form the filaments of bacterial flagella. FlaC is not essential for flagellar synthesis and motility. This Vibrio cholerae serotype O1 (strain ATCC 39541 / Classical Ogawa 395 / O395) protein is Flagellin C (flaC).